A 212-amino-acid chain; its full sequence is Regulator of G-protein signaling 2 (212 aa).

2 disordered regions span residues 11 to 33 and 48 to 69; these read HDCG…REKM and FLQN…PQTF. The necessary for membrane association stretch occupies residues 32–66; the sequence is KMKRTLLKDWKTRLSYFLQNSSSPGKPKTGKKSKP. Residues 79 to 116 are necessary to inhibit protein synthesis; the sequence is LWAEAFDELLASKYGLAAFRAFLKSEFCEENIEFWLAC. Residues 83 to 199 form the RGS domain; the sequence is AFDELLASKY…LESEFYQDLC (117 aa).

As to quaternary structure, interacts with GNAQ. Does not interact with GNAI1 and GNAI3. Interacts with EIF2B5. Interacts with PRKG1 (isoform alpha). Phosphorylated by protein kinase C. Phosphorylation by PRKG1 leads to activation of RGS2 activity.

It localises to the cell membrane. The protein resides in the cytoplasm. The protein localises to the nucleus. It is found in the nucleolus. In terms of biological role, regulates G protein-coupled receptor signaling cascades. Inhibits signal transduction by increasing the GTPase activity of G protein alpha subunits, thereby driving them into their inactive GDP-bound form. It is involved in the negative regulation of the angiotensin-activated signaling pathway. Plays a role in the regulation of blood pressure in response to signaling via G protein-coupled receptors and GNAQ. Plays a role in regulating the constriction and relaxation of vascular smooth muscle. Binds EIF2B5 and blocks its activity, thereby inhibiting the translation of mRNA into protein. The protein is Regulator of G-protein signaling 2 (RGS2) of Sus scrofa (Pig).